Here is an 83-residue protein sequence, read N- to C-terminus: U5-theraphotoxin-Hs1a 6 (83 aa).

Positions 1–21 are cleaved as a signal peptide; that stretch reads MKTSMFLTLTGLVLLFVVCYA. Residues 22–49 constitute a propeptide that is removed on maturation; sequence SESEEKEFPKELLSSIFAADSDFKVEER. Intrachain disulfides connect Cys51–Cys63, Cys56–Cys68, and Cys62–Cys75.

The protein belongs to the neurotoxin 10 (Hwtx-1) family. 51 (Hntx-8) subfamily. Hntx-8 sub-subfamily. As to expression, expressed by the venom gland.

The protein localises to the secreted. Functionally, agglutinates erythrocytes. In Cyriopagopus schmidti (Chinese bird spider), this protein is U5-theraphotoxin-Hs1a 6.